A 97-amino-acid chain; its full sequence is Protein CYSTEINE-RICH TRANSMEMBRANE MODULE 7 (97 aa).

The segment at 1–27 is disordered; sequence MASYHVSHDSYQSPGPSPLYQPIIEAP. Residues 15–27 are compositionally biased toward pro residues; sequence GPSPLYQPIIEAP. The chain crosses the membrane as a helical span at residues 68-88; it reads YVGCFPFLRSCLTTLCCCWFV.

Belongs to the CYSTM1 family. Homodimer and heterodimers. Interacts with CYSTM3, CYSTM4, CYSTM5, CYSTM6, CYSTM10, WIH1/CYSTM13 and CYSTM11. Binds weakly to CYSTM1, CYSTM2 and CYSTM12. Mostly expressed in siliques and, to a lower extent, in stems, roots, leaves and flowers.

The protein localises to the cell membrane. In terms of biological role, involved in resistance to abiotic stress. The sequence is that of Protein CYSTEINE-RICH TRANSMEMBRANE MODULE 7 from Arabidopsis thaliana (Mouse-ear cress).